Reading from the N-terminus, the 758-residue chain is 5-methyltetrahydropteroyltriglutamate--homocysteine methyltransferase (758 aa).

5-methyltetrahydropteroyltri-L-glutamate-binding positions include 16–19 and Lys-116; that span reads RELK. L-homocysteine contacts are provided by residues 436 to 438 and Glu-489; that span reads IGS. L-methionine contacts are provided by residues 436 to 438 and Glu-489; that span reads IGS. 5-methyltetrahydropteroyltri-L-glutamate is bound by residues 520–521 and Trp-566; that span reads RC. Asp-604 is an L-homocysteine binding site. Residue Asp-604 coordinates L-methionine. Glu-610 contributes to the 5-methyltetrahydropteroyltri-L-glutamate binding site. Zn(2+)-binding residues include His-646, Cys-648, and Glu-670. The active-site Proton donor is the His-699. Residue Cys-731 coordinates Zn(2+).

Belongs to the vitamin-B12 independent methionine synthase family. Zn(2+) serves as cofactor.

The catalysed reaction is 5-methyltetrahydropteroyltri-L-glutamate + L-homocysteine = tetrahydropteroyltri-L-glutamate + L-methionine. The protein operates within amino-acid biosynthesis; L-methionine biosynthesis via de novo pathway; L-methionine from L-homocysteine (MetE route): step 1/1. In terms of biological role, catalyzes the transfer of a methyl group from 5-methyltetrahydrofolate to homocysteine resulting in methionine formation. The polypeptide is 5-methyltetrahydropteroyltriglutamate--homocysteine methyltransferase (Xylella fastidiosa (strain 9a5c)).